The sequence spans 98 residues: Cystatin-B (98 aa).

M1 carries the post-translational modification N-acetylmethionine. The Secondary area of contact signature appears at Q46–G50.

This sequence belongs to the cystatin family. In terms of assembly, able to form dimers stabilized by noncovalent forces.

It is found in the cytoplasm. Its subcellular location is the nucleus. Its function is as follows. This is an intracellular thiol proteinase inhibitor. Tightly binding reversible inhibitor of cathepsins L, H and B. The polypeptide is Cystatin-B (CSTB) (Macaca fuscata fuscata (Japanese macaque)).